A 74-amino-acid chain; its full sequence is Mitochondrial import receptor subunit TOM6 homolog (74 aa).

Residues 1–16 (MASSTVPVSAAGSANE) are compositionally biased toward polar residues. The segment at 1–22 (MASSTVPVSAAGSANETPEIPD) is disordered. N-acetylalanine is present on Ala-2.

It belongs to the Tom6 family. As to quaternary structure, forms part of the preprotein translocase complex of the outer mitochondrial membrane (TOM complex) which consists of at least 7 different proteins (TOMM5, TOMM6, TOMM7, TOMM20, TOMM22, TOMM40 and TOMM70).

It localises to the mitochondrion outer membrane. This Homo sapiens (Human) protein is Mitochondrial import receptor subunit TOM6 homolog (TOMM6).